The sequence spans 456 residues: MPPGPWESCFWVGGLILWLSVGSSGDAPPTPQPKCADFQSANLFEGTDLKVQFLLFVPSNPSCGQLVEGSSDLQNSGFNATLGTKLIIHGFRVLGTKPSWIDTFIRTLLRATNANVIAVDWIYGSTGVYFSAVKNVIKLSLEISLFLNKLLVLGVSESSIHIIGVSLGAHVGGMVGQLFGGQLGQITGLDPAGPEYTRASVEERLDAGDALFVEAIHTDTDNLGIRIPVGHVDYFVNGGQDQPGCPTFFYAGYSYLICDHMRAVHLYISALENSCPLMAFPCASYKAFLAGRCLDCFNPFLLSCPRIGLVEQGGVKIEPLPKEVKVYLLTTSSAPYCMHHSLVEFHLKELRNKDTNIEVTFLSSNITSSSKITIPKQQRYGKGIIAHATPQCQINQVKFKFQSSNRVWKKDRTTIIGKFCTALLPVNDREKMVCLPEPVNLQASVTVSCDLKIACV.

The N-terminal stretch at 1 to 25 (MPPGPWESCFWVGGLILWLSVGSSG) is a signal peptide. N-linked (GlcNAc...) asparagine glycosylation is present at Asn79. The active-site Nucleophile is Ser166. Asp190 serves as the catalytic Charge relay system. The cysteines at positions 245 and 258 are disulfide-linked. The Charge relay system role is filled by His260. Intrachain disulfides connect Cys282/Cys293 and Cys296/Cys304. An N-linked (GlcNAc...) asparagine glycan is attached at Asn365. The tract at residues 374–456 (IPKQQRYGKG…VSCDLKIACV (83 aa)) is involved in the recognition of diacyl-phospholipids.

This sequence belongs to the AB hydrolase superfamily. Lipase family. In terms of tissue distribution, widely expressed. Expressed in placenta, prostate and liver. Weakly or not expressed in skin, leukocytes, platelets, colon, spleen, lung, muscle and kidney.

It localises to the secreted. The catalysed reaction is a 1,2-diacyl-sn-glycero-3-phospho-L-serine + H2O = a 2-acyl-sn-glycero-3-phospho-L-serine + a fatty acid + H(+). The enzyme catalyses 1,2-di-(9Z)-octadecenoyl-sn-glycero-3-phospho-L-serine + H2O = 2-(9Z-octadecenoyl)-sn-glycero-3-phospho-L-serine + (9Z)-octadecenoate + H(+). It catalyses the reaction 1-hexadecanoyl-2-(5Z,8Z,11Z,14Z-eicosatetraenoyl)-sn-glycero-3-phospho-L-serine + H2O = 2-(5Z,8Z,11Z,14Z)-eicosatetraenoyl-sn-glycero-3-phospho-L-serine + hexadecanoate + H(+). It carries out the reaction a 1-acyl-sn-glycero-3-phospho-L-serine + H2O = sn-glycero-3-phospho-L-serine + a fatty acid + H(+). The catalysed reaction is 1-(9Z-octadecenoyl)-sn-glycero-3-phospho-L-serine + H2O = sn-glycero-3-phospho-L-serine + (9Z)-octadecenoate + H(+). In terms of biological role, hydrolyzes the ester bond of the acyl group attached at the sn-1 position of phosphatidylserines (phospholipase A1 activity) and 1-acyl-2-lysophosphatidylserines (lysophospholipase activity) in the pathway of phosphatidylserines acyl chain remodeling. Cleaves phosphatidylserines exposed on the outer leaflet of the plasma membrane of apoptotic cells producing 2-acyl-1-lysophosphatidylserines, which in turn enhance mast cell activation and histamine production. Has no activity toward other glycerophospholipids including phosphatidylcholines, phosphatidylethanolamines, phosphatidic acids or phosphatidylinositols, or glycerolipids such as triolein. Hydrolyzes lyso-PS but not PS. This chain is Phospholipase A1 member A, found in Homo sapiens (Human).